We begin with the raw amino-acid sequence, 709 residues long: Caprin-1 (709 aa).

2 stretches are compositionally biased toward low complexity: residues 1 to 15 (MPSA…SKSS) and 22 to 43 (GSSG…QHPA). A disordered region spans residues 1 to 50 (MPSATSHSGSGSKSSGPPPPSGSSGSEAAAGAGAAAPASQHPATGTGAVQ). An N-acetylproline modification is found at Pro2. Pro2 is modified (N-acetylalanine). At Ser10 the chain carries Phosphoserine. Residues 60–94 (VIDKKLRNLEKKKGKLDDYQERMNKGERLNQDQLD) adopt a coiled-coil conformation. Position 115 is a phosphoserine (Ser115). A coiled-coil region spans residues 125–153 (KTIKKTARREQLMREEAEQKRLKTVLELQ). The residue at position 165 (Arg165) is an Omega-N-methylarginine. Positions 260–291 (EEAASAPAVEDQVPEAEPEPAEEYTEQSEVES) are disordered. Positions 271–291 (QVPEAEPEPAEEYTEQSEVES) are enriched in acidic residues. Phosphoserine occurs at positions 335 and 343. Residues 360–381 (QDLMAQMQGPYNFIQDSMLDFE) are G3BP1-binding. Disordered stretches follow at residues 417 to 446 (LAQP…TASQ), 475 to 499 (TDQT…GTSK), and 524 to 709 (APVP…QQVN). Polar residues predominate over residues 433-446 (PLVSSTSEGYTASQ). 2 stretches are compositionally biased toward low complexity: residues 477 to 491 (QTTA…SQPQ) and 537 to 570 (QQNQ…QTVV). Over residues 577-605 (PDQSHQVTGNHQQPPQQNTGFPRSNQPYY) the composition is skewed to polar residues. Tyr625 is subject to Phosphotyrosine; by EPHA4. Omega-N-methylarginine is present on residues Arg626 and Arg633. Tyr636 and Tyr639 each carry phosphotyrosine; by EPHA4. Arg640 carries the post-translational modification Omega-N-methylarginine. The span at 642-657 (SFSNTPNSGYTQSQFS) shows a compositional bias: polar residues. Residues Ser644 and Ser649 are each glycosylated (O-linked (GlcNAc) serine). 4 positions are modified to phosphotyrosine; by EPHA4: Tyr651, Tyr662, Tyr665, and Tyr670. Low complexity-rich tracts occupy residues 676-686 (RGSGQSGPRGA) and 697-709 (NRGM…QQVN). Arg698 carries the asymmetric dimethylarginine; alternate modification. The residue at position 698 (Arg698) is an Omega-N-methylarginine; alternate.

This sequence belongs to the caprin family. As to quaternary structure, may form homomultimers. Interacts with G3BP1; interaction is direct and promotes stress granule formation. Interacts with G3BP2; interaction is direct and promotes stress granule formation. Interacts with PQBP1. Interacts with DDX3X. Interacts (when phosphorylated by EPHA4) with FMR1; interaction with FMR1 promotes formation of a membraneless compartment. (Microbial infection) Interacts with Zika virus capsid protein C; this interaction is probably linked to the inhibition of stress granules formation by the virus. In terms of assembly, (Microbial infection) Interacts with rotavirus A non-structural protein 5; this interaction probably plays a role in the sequestration of CAPRIN1 in viral factories. As to quaternary structure, (Microbial infection) Interacts with Japanese encephalitis virus capsid protein C; this interaction is involved in the suppression of the integrated stress response by the virus. Tyrosine phosphorylation by EPHA4 promotes interaction with FMR1 and liquid-liquid phase separation (LLPS) for the formation of a membraneless compartment that concentrates mRNAs with associated regulatory factors. In terms of processing, O-glycosylated (O-GlcNAcylated), in a cell cycle-dependent manner. O-glycosylation by OGT inhibit ability to undergo liquid-liquid phase separation (LLPS). Ubiquitous.

It is found in the cytoplasm. The protein resides in the cytoplasmic ribonucleoprotein granule. It localises to the cytosol. The protein localises to the cell projection. Its subcellular location is the dendrite. It is found in the lamellipodium. Ability to mediate liquid-liquid phase separation is regulated by ATP: moderate concentrations of ATP enhance phase separation, whereas high concentrations of ATP lead to inhibition of phase separation. MRNA-binding protein that acts as a regulator of mRNAs transport, translation and/or stability, and which is involved in neurogenesis, synaptic plasticity in neurons and cell proliferation and migration in multiple cell types. Plays an essential role in cytoplasmic stress granule formation. Acts as an mRNA regulator by mediating formation of some phase-separated membraneless compartment: undergoes liquid-liquid phase separation upon binding to target mRNAs, leading to assemble mRNAs into cytoplasmic ribonucleoprotein granules that concentrate mRNAs with associated regulatory factors. Undergoes liquid-liquid phase separation following phosphorylation and interaction with FMR1, promoting formation of cytoplasmic ribonucleoprotein granules that concentrate mRNAs with factors that inhibit translation and mediate deadenylation of target mRNAs. In these cytoplasmic ribonucleoprotein granules, CAPRIN1 mediates recruitment of CNOT7 deadenylase, leading to mRNA deadenylation and degradation. Binds directly and selectively to MYC and CCND2 mRNAs. In neuronal cells, directly binds to several mRNAs associated with RNA granules, including BDNF, CAMK2A, CREB1, MAP2, NTRK2 mRNAs, as well as to GRIN1 and KPNB1 mRNAs, but not to rRNAs. The polypeptide is Caprin-1 (Homo sapiens (Human)).